Consider the following 698-residue polypeptide: Elongation factor G (698 aa).

In terms of domain architecture, tr-type G spans 8–284 (ANVRNIGIMA…AVVDYLPSPL (277 aa)). GTP is bound by residues 17–24 (AHIDAGKT), 81–85 (DTPGH), and 135–138 (NKLD).

The protein belongs to the TRAFAC class translation factor GTPase superfamily. Classic translation factor GTPase family. EF-G/EF-2 subfamily.

The protein localises to the cytoplasm. Catalyzes the GTP-dependent ribosomal translocation step during translation elongation. During this step, the ribosome changes from the pre-translocational (PRE) to the post-translocational (POST) state as the newly formed A-site-bound peptidyl-tRNA and P-site-bound deacylated tRNA move to the P and E sites, respectively. Catalyzes the coordinated movement of the two tRNA molecules, the mRNA and conformational changes in the ribosome. This chain is Elongation factor G, found in Salinispora tropica (strain ATCC BAA-916 / DSM 44818 / JCM 13857 / NBRC 105044 / CNB-440).